Consider the following 347-residue polypeptide: NADH-quinone oxidoreductase subunit H (347 aa).

Transmembrane regions (helical) follow at residues 13 to 33 (LIIA…VAYL), 50 to 70 (PNVV…KFVF), 82 to 102 (GVFL…WAVI), 115 to 135 (VGIL…IMGG), 161 to 181 (IGFV…TDIV), 198 to 218 (FLDW…ISAL), 248 to 268 (FLLF…LMTV), 286 to 306 (VPGI…FAMV), and 325 to 345 (VFLP…KVFG).

Belongs to the complex I subunit 1 family. In terms of assembly, NDH-1 is composed of 14 different subunits. Subunits NuoA, H, J, K, L, M, N constitute the membrane sector of the complex.

It localises to the cell inner membrane. The catalysed reaction is a quinone + NADH + 5 H(+)(in) = a quinol + NAD(+) + 4 H(+)(out). NDH-1 shuttles electrons from NADH, via FMN and iron-sulfur (Fe-S) centers, to quinones in the respiratory chain. The immediate electron acceptor for the enzyme in this species is believed to be ubiquinone. Couples the redox reaction to proton translocation (for every two electrons transferred, four hydrogen ions are translocated across the cytoplasmic membrane), and thus conserves the redox energy in a proton gradient. This subunit may bind ubiquinone. The protein is NADH-quinone oxidoreductase subunit H of Brucella abortus (strain 2308).